The chain runs to 946 residues: Protein RRC1 (946 aa).

Disordered regions lie at residues 1–29 (MSSF…KAED) and 41–183 (SFQG…NLYV). Composition is skewed to basic and acidic residues over residues 15 to 29 (KHRE…KAED), 62 to 75 (DKPK…KSKD), and 98 to 147 (KGKE…DRQG). In terms of domain architecture, RRM spans 179 to 260 (TNLYVGNLSP…YELKIGWGKA (82 aa)). The stretch at 329–372 (VIDTLALYVLDGECAFEQAIMERGRGNPLFKFMFELGSKEHTYY) is one SURP motif repeat. In terms of domain architecture, CID spans 437–582 (LTDPQRDEFE…GLRSTFLRSG (146 aa)). The SAP domain occupies 631-665 (LMNLPIAELERRCRHNGLSLVGGRVMMVTRLLSLE). 2 disordered regions span residues 740-797 (ASKW…EQRQ) and 836-946 (EVDY…RGTR). The span at 757-767 (SSSSGSDNTGG) shows a compositional bias: polar residues. Composition is skewed to basic and acidic residues over residues 772-781 (ADGEDLKGND), 854-868 (IIER…QESS), and 886-946 (STRE…RGTR).

In terms of assembly, component of the SWAP1-SFPS-RRC1 splicing factor complex which modulates pre-mRNA splicing to promote photomorphogenesis. Interacts with SWAP1 in a light-independent manner. As to expression, expressed in leaves, inflorescence stems, roots, flower buds, open flowers and siliques.

Its subcellular location is the nucleus speckle. In terms of biological role, as a member of the SWAP1-SFPS-RRC1 splicing factor complex, modulates photomorphogenesis by regulating the gene expression and pre-messenger RNA (mRNA) alternative splicing of a large number of genes, including those involved in plant responses to light signaling. SR-like splicing factor required for phytochrome B (phyB) signal transduction and involved in phyB-dependent alternative splicing. This Arabidopsis thaliana (Mouse-ear cress) protein is Protein RRC1.